The following is a 246-amino-acid chain: Aspartate/glutamate leucyltransferase (246 aa).

Belongs to the R-transferase family. Bpt subfamily.

It is found in the cytoplasm. It catalyses the reaction N-terminal L-glutamyl-[protein] + L-leucyl-tRNA(Leu) = N-terminal L-leucyl-L-glutamyl-[protein] + tRNA(Leu) + H(+). It carries out the reaction N-terminal L-aspartyl-[protein] + L-leucyl-tRNA(Leu) = N-terminal L-leucyl-L-aspartyl-[protein] + tRNA(Leu) + H(+). In terms of biological role, functions in the N-end rule pathway of protein degradation where it conjugates Leu from its aminoacyl-tRNA to the N-termini of proteins containing an N-terminal aspartate or glutamate. The protein is Aspartate/glutamate leucyltransferase of Rhodospirillum rubrum (strain ATCC 11170 / ATH 1.1.1 / DSM 467 / LMG 4362 / NCIMB 8255 / S1).